A 149-amino-acid polypeptide reads, in one-letter code: Transthyretin (149 aa).

An N-terminal signal peptide occupies residues 1–22 (MAFHSLLLLCLAGLAFVSETAA). Sulfocysteine is present on Cys-32. Lys-37 contacts L-thyroxine. Residue Glu-64 is modified to 4-carboxyglutamate. 2 residues coordinate L-thyroxine: Glu-76 and Ser-139.

The protein belongs to the transthyretin family. Homotetramer. Dimer of dimers. In the homotetramer, subunits assemble around a central channel that can accommodate two ligand molecules. Interacts with RBP4. Sulfonation of the reactive cysteine Cys-32 enhances the stability of the native conformation of TTR, avoiding misassembly of the protein leading to amyloid formation. As to expression, detected in liver.

It is found in the secreted. Its function is as follows. Thyroid hormone-binding protein. Probably transports thyroxine from the bloodstream to the brain. This Macropus giganteus (Eastern gray kangaroo) protein is Transthyretin (TTR).